Consider the following 396-residue polypeptide: Deoxyuridine 5'-triphosphate nucleotidohydrolase (396 aa).

Residues 280–282 (RSS) and 380–381 (FG) each bind substrate.

The protein belongs to the dUTPase family. It depends on Mg(2+) as a cofactor.

The enzyme catalyses dUTP + H2O = dUMP + diphosphate + H(+). Involved in nucleotide metabolism: produces dUMP, the immediate precursor of thymidine nucleotides and decreases the intracellular concentration of dUTP to avoid uracil incorporation into viral DNA. This is Deoxyuridine 5'-triphosphate nucleotidohydrolase from Varicella-zoster virus (strain Dumas) (HHV-3).